Here is a 491-residue protein sequence, read N- to C-terminus: Proline--tRNA ligase (491 aa).

Belongs to the class-II aminoacyl-tRNA synthetase family. ProS type 3 subfamily. Homodimer.

The protein localises to the cytoplasm. The enzyme catalyses tRNA(Pro) + L-proline + ATP = L-prolyl-tRNA(Pro) + AMP + diphosphate. Its function is as follows. Catalyzes the attachment of proline to tRNA(Pro) in a two-step reaction: proline is first activated by ATP to form Pro-AMP and then transferred to the acceptor end of tRNA(Pro). In Amoebophilus asiaticus (strain 5a2), this protein is Proline--tRNA ligase.